Consider the following 289-residue polypeptide: MALAPTMKALTFSADDETSLEKAVTEALSGSVDLNMGLRRCAAFPAENTGAFLCELTTKETKSFIGKFSDKVRGRVFIDHAVIHMMYIPVILNTTHAIAELKLKNLATGDELYGGTKVNLNKAFILTMTWPRSLFAEAVHNHKGLYLGGTVSCASSVPAHAKIGMWYPIWSEKVSIKQLYQNTIDIHKTEAIETFTPTMISSDKEMRSLLRSRASIDVAAKTREKPVICSERVSLLDQHTQGVDFTVTEIEPEKDDDAGTSILGPKMVPIEQVPSVKLSSEAGRNLLTA.

This sequence belongs to the ilarvirus movement protein family.

Its subcellular location is the host cell junction. The protein resides in the host plasmodesma. Its function is as follows. Transports viral genome to neighboring plant cells directly through plasmosdesmata, without any budding. The movement protein allows efficient cell to cell propagation, by bypassing the host cell wall barrier. Acts by forming a tubular structure at the host plasmodesmata, enlarging it enough to allow free passage of virion capsids. This is Movement protein from Tobacco streak virus (strain WC) (TSV).